We begin with the raw amino-acid sequence, 303 residues long: tRNA dimethylallyltransferase (303 aa).

Residue 13–20 coordinates ATP; the sequence is GPTASGKS. Position 15-20 (15-20) interacts with substrate; it reads TASGKS. Interaction with substrate tRNA stretches follow at residues 38–41 and 162–166; these read DSMQ and QRLLR.

This sequence belongs to the IPP transferase family. Monomer. Requires Mg(2+) as cofactor.

The enzyme catalyses adenosine(37) in tRNA + dimethylallyl diphosphate = N(6)-dimethylallyladenosine(37) in tRNA + diphosphate. Catalyzes the transfer of a dimethylallyl group onto the adenine at position 37 in tRNAs that read codons beginning with uridine, leading to the formation of N6-(dimethylallyl)adenosine (i(6)A). The chain is tRNA dimethylallyltransferase from Methylocella silvestris (strain DSM 15510 / CIP 108128 / LMG 27833 / NCIMB 13906 / BL2).